A 721-amino-acid chain; its full sequence is 1,4-alpha-glucan branching enzyme GlgB (721 aa).

D400 acts as the Nucleophile in catalysis. The active-site Proton donor is the E453.

This sequence belongs to the glycosyl hydrolase 13 family. GlgB subfamily. In terms of assembly, monomer.

The catalysed reaction is Transfers a segment of a (1-&gt;4)-alpha-D-glucan chain to a primary hydroxy group in a similar glucan chain.. The protein operates within glycan biosynthesis; glycogen biosynthesis. Catalyzes the formation of the alpha-1,6-glucosidic linkages in glycogen by scission of a 1,4-alpha-linked oligosaccharide from growing alpha-1,4-glucan chains and the subsequent attachment of the oligosaccharide to the alpha-1,6 position. The chain is 1,4-alpha-glucan branching enzyme GlgB from Chlamydia abortus (strain DSM 27085 / S26/3) (Chlamydophila abortus).